The sequence spans 244 residues: tRNA1(Val) (adenine(37)-N6)-methyltransferase (244 aa).

Belongs to the methyltransferase superfamily. tRNA (adenine-N(6)-)-methyltransferase family.

Its subcellular location is the cytoplasm. The enzyme catalyses adenosine(37) in tRNA1(Val) + S-adenosyl-L-methionine = N(6)-methyladenosine(37) in tRNA1(Val) + S-adenosyl-L-homocysteine + H(+). Specifically methylates the adenine in position 37 of tRNA(1)(Val) (anticodon cmo5UAC). In Photorhabdus laumondii subsp. laumondii (strain DSM 15139 / CIP 105565 / TT01) (Photorhabdus luminescens subsp. laumondii), this protein is tRNA1(Val) (adenine(37)-N6)-methyltransferase.